The following is a 157-amino-acid chain: Putative pre-16S rRNA nuclease (157 aa).

It belongs to the YqgF nuclease family.

Its subcellular location is the cytoplasm. Its function is as follows. Could be a nuclease involved in processing of the 5'-end of pre-16S rRNA. The sequence is that of Putative pre-16S rRNA nuclease from Ruegeria sp. (strain TM1040) (Silicibacter sp.).